A 101-amino-acid polypeptide reads, in one-letter code: Urease subunit beta (101 aa).

It belongs to the urease beta subunit family. In terms of assembly, heterotrimer of UreA (gamma), UreB (beta) and UreC (alpha) subunits. Three heterotrimers associate to form the active enzyme.

The protein localises to the cytoplasm. It catalyses the reaction urea + 2 H2O + H(+) = hydrogencarbonate + 2 NH4(+). It functions in the pathway nitrogen metabolism; urea degradation; CO(2) and NH(3) from urea (urease route): step 1/1. The chain is Urease subunit beta from Bradyrhizobium sp. (strain BTAi1 / ATCC BAA-1182).